The sequence spans 381 residues: L-lactate dehydrogenase (381 aa).

The 380-residue stretch at 1–380 (MIISASTDYR…NRDSLAVSER (380 aa)) folds into the FMN hydroxy acid dehydrogenase domain. Tyr-24 serves as a coordination point for substrate. 2 residues coordinate FMN: Ser-106 and Gln-127. Tyr-129 contacts substrate. Residue Thr-155 coordinates FMN. Residue Arg-164 coordinates substrate. Lys-251 contacts FMN. His-275 serves as the catalytic Proton acceptor. Arg-278 is a binding site for substrate. 306-330 (DSGIRTGLDVVRMIALGADSVLLGR) serves as a coordination point for FMN.

This sequence belongs to the FMN-dependent alpha-hydroxy acid dehydrogenase family. FMN serves as cofactor.

It is found in the cell inner membrane. It carries out the reaction (S)-lactate + A = pyruvate + AH2. In terms of biological role, catalyzes the conversion of L-lactate to pyruvate. Is coupled to the respiratory chain. This chain is L-lactate dehydrogenase, found in Yersinia pseudotuberculosis serotype O:1b (strain IP 31758).